The chain runs to 118 residues: Basic phospholipase A2 PA-12C (118 aa).

7 disulfides stabilise this stretch: cysteine 11/cysteine 71, cysteine 27/cysteine 117, cysteine 29/cysteine 45, cysteine 44/cysteine 98, cysteine 51/cysteine 91, cysteine 60/cysteine 84, and cysteine 78/cysteine 89. 3 residues coordinate Ca(2+): tyrosine 28, glycine 30, and glycine 32. The active site involves histidine 48. Aspartate 49 contacts Ca(2+). Aspartate 92 is a catalytic residue.

This sequence belongs to the phospholipase A2 family. Group I subfamily. D49 sub-subfamily. It depends on Ca(2+) as a cofactor. Expressed by the venom gland.

It localises to the secreted. It carries out the reaction a 1,2-diacyl-sn-glycero-3-phosphocholine + H2O = a 1-acyl-sn-glycero-3-phosphocholine + a fatty acid + H(+). PLA2 catalyzes the calcium-dependent hydrolysis of the 2-acyl groups in 3-sn-phosphoglycerides. The protein is Basic phospholipase A2 PA-12C of Pseudechis australis (Mulga snake).